The following is a 226-amino-acid chain: Ribonuclease S-7 (226 aa).

The signal sequence occupies residues 1–27; the sequence is MGITGMIYIVTMVFSLIVLILSSSTVG. Q36 contacts RNA. A disulfide bond links C42 and C49. Residue H60 coordinates RNA. Residue H60 is the Proton donor of the active site. N-linked (GlcNAc...) asparagine; alternate glycans are attached at residues N74 and N77. C75 and C119 are disulfide-bonded. Residues 98 to 99, F108, 111 to 112, and 115 to 116 each bind RNA; these read NV, KQ, and KH. Q112 is a catalytic residue. The Proton acceptor role is filled by H116. N126, N144, and N172 each carry an N-linked (GlcNAc...) asparagine glycan. 2 disulfide bridges follow: C183–C220 and C198–C209.

This sequence belongs to the RNase T2 family. In terms of processing, the N-glycans attached at Asn-74 and Asn-77 consist of either monosaccharide (GlcNAc) or disaccharide (GlcNAc-GlcNAc) that could not be distinguished. The N-glycan at Asn-144 contains mannose and xylose, and at Asn-126 contains mannose, xylose and fucose. The N-glycan at Asn-172 consists of disaccharide (GlcNAc-GlcNAc).

The enzyme catalyses a ribonucleotidyl-ribonucleotide-RNA + H2O = a 3'-end 3'-phospho-ribonucleotide-RNA + a 5'-end dephospho-ribonucleoside-RNA + H(+). Self-incompatibility (SI) is the inherited ability of a flowering plant to prevent self-fertilization by discriminating between self and non-self pollen during pollination. In many species, self-incompatibility is controlled by the single, multiallelic locus S. This chain is Ribonuclease S-7, found in Pyrus pyrifolia (Chinese pear).